A 99-amino-acid polypeptide reads, in one-letter code: Large ribosomal subunit protein bL21 (99 aa).

Belongs to the bacterial ribosomal protein bL21 family. As to quaternary structure, part of the 50S ribosomal subunit. Contacts protein L20.

Its function is as follows. This protein binds to 23S rRNA in the presence of protein L20. The protein is Large ribosomal subunit protein bL21 of Mycoplasmopsis pulmonis (strain UAB CTIP) (Mycoplasma pulmonis).